The following is a 213-amino-acid chain: Large ribosomal subunit protein uL1 (213 aa).

It belongs to the universal ribosomal protein uL1 family. Part of the 50S ribosomal subunit.

Binds directly to 23S rRNA. Probably involved in E site tRNA release. Functionally, protein L1 is also a translational repressor protein, it controls the translation of its operon by binding to its mRNA. The chain is Large ribosomal subunit protein uL1 from Methanococcoides burtonii (strain DSM 6242 / NBRC 107633 / OCM 468 / ACE-M).